The following is a 384-amino-acid chain: Ceramide very long chain fatty acid hydroxylase SCS7 (384 aa).

Over 1–197 the chain is Cytoplasmic; sequence MSTNTSKTLE…NFLEPLTKTA (197 aa). The 82-residue stretch at 9–90 folds into the Cytochrome b5 heme-binding domain; sequence LELFSKKTVQ…EDEYLIGYLA (82 aa). 2 residues coordinate heme: His-45 and His-72. A helical transmembrane segment spans residues 198–216; sequence WWVVPVAWLPVVVYHMGVA. Over 217–221 the chain is Lumenal; the sequence is LKNMN. The helical transmembrane segment at 222–246 threads the bilayer; it reads QLFACFLFCVGVFVWTLIEYGLHRF. Residues His-244, His-249, His-268, His-271, and His-272 each contribute to the Zn(2+) site. Residues 247–284 are Cytoplasmic-facing; that stretch reads LFHFDDWLPESNIAFATHFLLHGCHHYLPMDKYRLVMP. Residues 285–302 traverse the membrane as a helical segment; that stretch reads PTLFVILCAPFYKLVFAL. Residues 303-304 are Lumenal-facing; the sequence is LP. A helical membrane pass occupies residues 305–328; it reads LYWAYAGFAGGLFGYVCYDECHFF. Zn(2+) is bound by residues His-326, His-330, His-345, His-348, and His-349. Topologically, residues 329–384 are cytoplasmic; that stretch reads LHHSKLPPFMRKLKKYHLEHHYKNYQLGFGVTSWFWDEVFGTYLGPDAPLSKMKYE.

It belongs to the sterol desaturase family. SCS7 subfamily. It depends on Zn(2+) as a cofactor.

It localises to the endoplasmic reticulum membrane. The enzyme catalyses an N-(1,2 saturated acyl)-(4R)-hydroxysphinganine + 2 Fe(II)-[cytochrome b5] + O2 + 2 H(+) = an N-(2R-hydroxyacyl)-4R-hydroxysphinganine + 2 Fe(III)-[cytochrome b5] + H2O. It carries out the reaction an N-(1,2-saturated acyl)sphinganine + 2 Fe(II)-[cytochrome b5] + O2 + 2 H(+) = an N-[(2'R)-hydroxyacyl]sphinganine + 2 Fe(III)-[cytochrome b5] + H2O. The catalysed reaction is N-hexacosanoyl-(4R)-hydroxysphinganine + 2 Fe(II)-[cytochrome b5] + O2 + 2 H(+) = N-(2-hydroxyhexacosanyl)-(4R)-hydroxysphinganine + 2 Fe(III)-[cytochrome b5] + H2O. Its pathway is sphingolipid metabolism. Ceramide hydroxylase involved in the hydroxylation of sphingolipid-associated very long chain fatty acids. Postulated to hydroxylate the very long chain fatty acid of dihydroceramides and phytoceramides at C-2. In Saccharomyces cerevisiae (strain ATCC 204508 / S288c) (Baker's yeast), this protein is Ceramide very long chain fatty acid hydroxylase SCS7.